Reading from the N-terminus, the 358-residue chain is Chorismate synthase (358 aa).

NADP(+) is bound by residues Arg-48 and Arg-54. FMN is bound by residues 125–127 (RSS), Gly-282, 297–301 (KPPAS), and Arg-323.

Belongs to the chorismate synthase family. Homotetramer. Requires FMNH2 as cofactor.

The catalysed reaction is 5-O-(1-carboxyvinyl)-3-phosphoshikimate = chorismate + phosphate. It participates in metabolic intermediate biosynthesis; chorismate biosynthesis; chorismate from D-erythrose 4-phosphate and phosphoenolpyruvate: step 7/7. Catalyzes the anti-1,4-elimination of the C-3 phosphate and the C-6 proR hydrogen from 5-enolpyruvylshikimate-3-phosphate (EPSP) to yield chorismate, which is the branch point compound that serves as the starting substrate for the three terminal pathways of aromatic amino acid biosynthesis. This reaction introduces a second double bond into the aromatic ring system. This Roseiflexus castenholzii (strain DSM 13941 / HLO8) protein is Chorismate synthase.